A 350-amino-acid polypeptide reads, in one-letter code: GTP 3',8-cyclase (350 aa).

In terms of domain architecture, Radical SAM core spans 27 to 245; sequence TFGRIATDLR…LRAHFTLVPD (219 aa). Residue Arg-36 participates in GTP binding. Cys-43 and Cys-47 together coordinate [4Fe-4S] cluster. S-adenosyl-L-methionine is bound at residue Tyr-49. Cys-50 provides a ligand contact to [4Fe-4S] cluster. Arg-87 is a GTP binding site. Gly-91 is a binding site for S-adenosyl-L-methionine. Residue Thr-118 participates in GTP binding. An S-adenosyl-L-methionine-binding site is contributed by Ser-142. A GTP-binding site is contributed by Lys-179. An S-adenosyl-L-methionine-binding site is contributed by Met-213. [4Fe-4S] cluster is bound by residues Cys-277 and Cys-280. 282–284 provides a ligand contact to GTP; the sequence is RTR. Residue Cys-294 participates in [4Fe-4S] cluster binding.

Belongs to the radical SAM superfamily. MoaA family. Monomer and homodimer. Requires [4Fe-4S] cluster as cofactor.

The catalysed reaction is GTP + AH2 + S-adenosyl-L-methionine = (8S)-3',8-cyclo-7,8-dihydroguanosine 5'-triphosphate + 5'-deoxyadenosine + L-methionine + A + H(+). It participates in cofactor biosynthesis; molybdopterin biosynthesis. Functionally, catalyzes the cyclization of GTP to (8S)-3',8-cyclo-7,8-dihydroguanosine 5'-triphosphate. The chain is GTP 3',8-cyclase from Mycobacterium sp. (strain JLS).